The primary structure comprises 548 residues: Alpha-humulene synthase (548 aa).

3 residues coordinate Mg(2+): D302, D306, and E453. The short motif at 302-306 is the DDXXD motif element; sequence DDIYD.

Belongs to the terpene synthase family. As to expression, mostly expressed in rhizomes.

The catalysed reaction is (2E,6E)-farnesyl diphosphate = alpha-humulene + diphosphate. Functionally, catalyzes the formation of alpha-humulene in the first step of zerumbone biosynthesis, a highly promising multi-anticancer agent. Also mediates formation of beta-caryophyllene at a much lower level. The protein is Alpha-humulene synthase (ZSS1) of Zingiber zerumbet (Shampoo ginger).